The primary structure comprises 199 residues: Thymidine kinase (199 aa).

ATP is bound by residues 15–22 and 88–91; these read GSMFSGKS and DEVQ. The active-site Proton acceptor is the Glu89. Zn(2+) contacts are provided by Cys145, Cys148, Cys183, and His186.

Belongs to the thymidine kinase family. Homotetramer.

The protein resides in the cytoplasm. It carries out the reaction thymidine + ATP = dTMP + ADP + H(+). The chain is Thymidine kinase from Staphylococcus aureus (strain Mu50 / ATCC 700699).